A 377-amino-acid polypeptide reads, in one-letter code: Chaperone protein DnaJ (377 aa).

Residues 5–70 (DYYEVLGVGR…NKKAAYDQFG (66 aa)) form the J domain. A CR-type zinc finger spans residues 133–211 (GLTKELRIPT…CHGDGRVEKT (79 aa)). Zn(2+) is bound by residues Cys146, Cys149, Cys163, Cys166, Cys185, Cys188, Cys199, and Cys202. 4 CXXCXGXG motif repeats span residues 146–153 (CDVCDGSG), 163–170 (CGTCHGQG), 185–192 (CPTCHGRG), and 199–206 (CSKCHGDG).

This sequence belongs to the DnaJ family. In terms of assembly, homodimer. Zn(2+) is required as a cofactor.

Its subcellular location is the cytoplasm. In terms of biological role, participates actively in the response to hyperosmotic and heat shock by preventing the aggregation of stress-denatured proteins and by disaggregating proteins, also in an autonomous, DnaK-independent fashion. Unfolded proteins bind initially to DnaJ; upon interaction with the DnaJ-bound protein, DnaK hydrolyzes its bound ATP, resulting in the formation of a stable complex. GrpE releases ADP from DnaK; ATP binding to DnaK triggers the release of the substrate protein, thus completing the reaction cycle. Several rounds of ATP-dependent interactions between DnaJ, DnaK and GrpE are required for fully efficient folding. Also involved, together with DnaK and GrpE, in the DNA replication of plasmids through activation of initiation proteins. The chain is Chaperone protein DnaJ from Shewanella sp. (strain ANA-3).